The sequence spans 90 residues: Cell division topological specificity factor (90 aa).

Positions 1–21 (MAGFWSKIFGNDEKPSSAQTA) are disordered. Positions 10-21 (GNDEKPSSAQTA) are enriched in basic and acidic residues.

Belongs to the MinE family.

In terms of biological role, prevents the cell division inhibition by proteins MinC and MinD at internal division sites while permitting inhibition at polar sites. This ensures cell division at the proper site by restricting the formation of a division septum at the midpoint of the long axis of the cell. In Acinetobacter baylyi (strain ATCC 33305 / BD413 / ADP1), this protein is Cell division topological specificity factor.